Reading from the N-terminus, the 440-residue chain is MFLAQEIIRKKRDGHALSDEEIRFFINGIRDNTISEGQIAALAMTIFFHDMSMPERVSLTMAMRDSGTVLNWKSLNLNGPIVDKHSTGGVGDVTSLMLGPMVAACGGYVPMISGRGLGHTGGTLDKLEAIPGFDIFPDDNRFREIIKDVGVAIIGQTSSLAPADKRFYATRDITATVDSIPLITASILAKKLAEGLDALVMDVKVGSGAFMPTYELSAALAEAIVGVANGAGVRTTALLTDMNQVLASSAGNAVEVREAVQFLTGEYRNPRLFDVTMALCVEMLISGKLAADDAEARAKLQAVLDNGKAAEVFGRMVAAQKGPTDFVENYDHYLPTAMLSKAVYADTEGFISAMDTRALGMAVVSMGGGRRQASDTIDYSVGFTDMARLGDHVDGQRPLAVIHAKDENSWQEAAKAVKAAIKLDDKAPEITPTVYRRITE.

It belongs to the thymidine/pyrimidine-nucleoside phosphorylase family. In terms of assembly, homodimer.

It catalyses the reaction thymidine + phosphate = 2-deoxy-alpha-D-ribose 1-phosphate + thymine. It functions in the pathway pyrimidine metabolism; dTMP biosynthesis via salvage pathway; dTMP from thymine: step 1/2. In terms of biological role, the enzymes which catalyze the reversible phosphorolysis of pyrimidine nucleosides are involved in the degradation of these compounds and in their utilization as carbon and energy sources, or in the rescue of pyrimidine bases for nucleotide synthesis. The chain is Thymidine phosphorylase from Klebsiella pneumoniae (strain 342).